A 432-amino-acid chain; its full sequence is Chorismate synthase aro-2 (432 aa).

Active-site residues include His17, His106, and Asp367. Residues Leu406–Gln432 form a disordered region. The segment covering Gln408 to Gln432 has biased composition (polar residues).

This sequence belongs to the chorismate synthase family. In terms of assembly, homotetramer.

It catalyses the reaction 5-O-(1-carboxyvinyl)-3-phosphoshikimate = chorismate + phosphate. It carries out the reaction FMNH2 + NADP(+) = FMN + NADPH + 2 H(+). The protein operates within metabolic intermediate biosynthesis; chorismate biosynthesis; chorismate from D-erythrose 4-phosphate and phosphoenolpyruvate: step 7/7. Its function is as follows. Bifunctional chorismate synthase and flavin reductase that catalyzes the conversion of 5-enolpyruvylshikimate 3-phosphate (EPSP) to form chorismate, which is the last common intermediate in the synthesis of the three aromatic amino acids phenylalanine, tyrosine and tryptophan. Acts also as a flavin reductase (FR) able to generate reduced flavin mononucleotide in the presence of NADPH. The chain is Chorismate synthase aro-2 from Neurospora crassa (strain ATCC 24698 / 74-OR23-1A / CBS 708.71 / DSM 1257 / FGSC 987).